We begin with the raw amino-acid sequence, 486 residues long: High-affinity iron permease fer2 (486 aa).

The next 2 helical transmembrane spans lie at 76–96 (IVLL…AAFL) and 113–133 (LWEG…SLAI). A glycan (N-linked (GlcNAc...) asparagine) is linked at N174. The interval 175-209 (HSDDSASASSSSARQAAEEEAGTKTTRTEKLNPLE) is disordered. A compositionally biased stretch (low complexity) spans 179–189 (SASASSSSARQ). 3 helical membrane-spanning segments follow: residues 252–272 (ALFT…VVFI), 283–303 (SIPL…FLIF), and 308–328 (LVSV…IASG). An N-linked (GlcNAc...) asparagine glycan is attached at N393. Residues 400–420 (SVFMYIGYWFAVAGYLWYQIW) form a helical membrane-spanning segment. Residue N438 is glycosylated (N-linked (GlcNAc...) asparagine). Positions 441 to 486 (IQARQRKQEKAHQRQLREADQEEHGHSSNSDKQQHPSEAGPSTLSH) are disordered. The span at 446 to 466 (RKQEKAHQRQLREADQEEHGH) shows a compositional bias: basic and acidic residues.

Belongs to the oxidase-dependent Fe transporter (OFeT) (TC 9.A.10.1) family.

It is found in the cell membrane. Its function is as follows. Permease for high affinity iron uptake. The sequence is that of High-affinity iron permease fer2 from Mycosarcoma maydis (Corn smut fungus).